Reading from the N-terminus, the 142-residue chain is Large ribosomal subunit protein uL13 (142 aa).

Belongs to the universal ribosomal protein uL13 family. As to quaternary structure, part of the 50S ribosomal subunit.

Its function is as follows. This protein is one of the early assembly proteins of the 50S ribosomal subunit, although it is not seen to bind rRNA by itself. It is important during the early stages of 50S assembly. The chain is Large ribosomal subunit protein uL13 from Cronobacter sakazakii (strain ATCC BAA-894) (Enterobacter sakazakii).